Reading from the N-terminus, the 383-residue chain is Dynein axonemal assembly factor 11 (383 aa).

LRR repeat units lie at residues L20–E45, L46–K66, Y67–A89, and L90–R110. The LRRCT domain maps to V128 to D146. The disordered stretch occupies residues K201–R244. Positions E211–Q239 form a coiled coil.

This sequence belongs to the tilB family.

The protein localises to the cytoplasm. It localises to the cytoskeleton. The protein resides in the flagellum basal body. In terms of biological role, involved in the regulation of the cell cycle; is required for the basal body replication and new flagellum biogenesis. In Trypanosoma brucei brucei, this protein is Dynein axonemal assembly factor 11 (dnaaf11).